Here is a 78-residue protein sequence, read N- to C-terminus: NAD(P)H-quinone oxidoreductase subunit O (78 aa).

It belongs to the complex I NdhO subunit family. In terms of assembly, NDH-1 can be composed of about 15 different subunits; different subcomplexes with different compositions have been identified which probably have different functions.

It is found in the cellular thylakoid membrane. It catalyses the reaction a plastoquinone + NADH + (n+1) H(+)(in) = a plastoquinol + NAD(+) + n H(+)(out). It carries out the reaction a plastoquinone + NADPH + (n+1) H(+)(in) = a plastoquinol + NADP(+) + n H(+)(out). Its function is as follows. NDH-1 shuttles electrons from an unknown electron donor, via FMN and iron-sulfur (Fe-S) centers, to quinones in the respiratory and/or the photosynthetic chain. The immediate electron acceptor for the enzyme in this species is believed to be plastoquinone. Couples the redox reaction to proton translocation, and thus conserves the redox energy in a proton gradient. Cyanobacterial NDH-1 also plays a role in inorganic carbon-concentration. The polypeptide is NAD(P)H-quinone oxidoreductase subunit O (Prochlorococcus marinus (strain AS9601)).